A 293-amino-acid chain; its full sequence is 4-diphosphocytidyl-2-C-methyl-D-erythritol kinase (293 aa).

Lys16 is a catalytic residue. Pro99–Ser109 provides a ligand contact to ATP. Asp141 is an active-site residue.

The protein belongs to the GHMP kinase family. IspE subfamily.

The catalysed reaction is 4-CDP-2-C-methyl-D-erythritol + ATP = 4-CDP-2-C-methyl-D-erythritol 2-phosphate + ADP + H(+). It participates in isoprenoid biosynthesis; isopentenyl diphosphate biosynthesis via DXP pathway; isopentenyl diphosphate from 1-deoxy-D-xylulose 5-phosphate: step 3/6. Its function is as follows. Catalyzes the phosphorylation of the position 2 hydroxy group of 4-diphosphocytidyl-2C-methyl-D-erythritol. The sequence is that of 4-diphosphocytidyl-2-C-methyl-D-erythritol kinase from Paraburkholderia phymatum (strain DSM 17167 / CIP 108236 / LMG 21445 / STM815) (Burkholderia phymatum).